The following is a 146-amino-acid chain: Large ribosomal subunit protein uL15 (146 aa).

Residues 1–13 (MKLHELKAAEGSR) are compositionally biased toward basic and acidic residues. The tract at residues 1–51 (MKLHELKAAEGSRKVRNRVGRGTSSGNGKTSGRGQKGQKARSGGGVRLGFE) is disordered. 2 stretches are compositionally biased toward gly residues: residues 23–35 (TSSG…GRGQ) and 42–51 (SGGGVRLGFE).

This sequence belongs to the universal ribosomal protein uL15 family. As to quaternary structure, part of the 50S ribosomal subunit.

In terms of biological role, binds to the 23S rRNA. This Streptococcus pyogenes serotype M1 protein is Large ribosomal subunit protein uL15.